A 381-amino-acid polypeptide reads, in one-letter code: Dihydroorotate dehydrogenase (quinone) (381 aa).

Residues 74–78 (AGFDK) and T98 contribute to the FMN site. K78 contacts substrate. Residue 123 to 127 (NRMGF) coordinates substrate. Residues N152 and N185 each contribute to the FMN site. N185 provides a ligand contact to substrate. S188 serves as the catalytic Nucleophile. N190 contributes to the substrate binding site. K223 and T251 together coordinate FMN. 252-253 (NT) is a binding site for substrate. Residues G289, G318, and 339-340 (YT) contribute to the FMN site. The interval 359–381 (RSSPPSPDVTLPPENTPVGQIQA) is disordered.

It belongs to the dihydroorotate dehydrogenase family. Type 2 subfamily. As to quaternary structure, monomer. FMN serves as cofactor.

The protein resides in the cell membrane. The enzyme catalyses (S)-dihydroorotate + a quinone = orotate + a quinol. Its pathway is pyrimidine metabolism; UMP biosynthesis via de novo pathway; orotate from (S)-dihydroorotate (quinone route): step 1/1. Catalyzes the conversion of dihydroorotate to orotate with quinone as electron acceptor. The polypeptide is Dihydroorotate dehydrogenase (quinone) (Synechococcus sp. (strain JA-2-3B'a(2-13)) (Cyanobacteria bacterium Yellowstone B-Prime)).